The following is a 594-amino-acid chain: Probable methylenetetrahydrofolate reductase (NADH) (594 aa).

The active-site Proton donor/acceptor is the Glu-21. Residues 21 to 26 (EYFPPK) and 52 to 53 (TW) each bind NAD(+). FAD is bound by residues 52 to 53 (TW), His-81, 111 to 113 (RGD), Tyr-153, 157 to 160 (HPDA), Asp-175, and Lys-182. Asp-113 contributes to the substrate binding site. 2 residues coordinate substrate: Gln-193 and Tyr-285.

It belongs to the methylenetetrahydrofolate reductase family. Homodimer. The cofactor is FAD.

The catalysed reaction is (6S)-5-methyl-5,6,7,8-tetrahydrofolate + NAD(+) = (6R)-5,10-methylene-5,6,7,8-tetrahydrofolate + NADH + H(+). It functions in the pathway one-carbon metabolism; tetrahydrofolate interconversion. With respect to regulation, plant MTHFRs strongly prefer NADH over NADPH. Not inhibited by methionine or S-adenosylmethionine. Its function is as follows. The probable reversibility of the MTHFR reaction in plants suggests that they can metabolize the methyl group of 5,10-methylenetetrahydrofolate to serine, sugars and starch. This is Probable methylenetetrahydrofolate reductase (NADH) from Oryza sativa subsp. japonica (Rice).